The sequence spans 566 residues: Urease subunit beta (566 aa).

In terms of domain architecture, Urease spans 129–566 (GGIDTHIHFI…VPMARRYFMF (438 aa)). His-134, His-136, and Lys-217 together coordinate Ni(2+). The residue at position 217 (Lys-217) is an N6-carboxylysine. His-219 is a substrate binding site. Residues His-246 and His-272 each contribute to the Ni(2+) site. His-320 functions as the Proton donor in the catalytic mechanism. Asp-360 lines the Ni(2+) pocket.

It belongs to the metallo-dependent hydrolases superfamily. Urease alpha subunit family. As to quaternary structure, heterohexamer of 3 UreA (alpha) and 3 UreB (beta) subunits. Requires Ni cation as cofactor. In terms of processing, carboxylation allows a single lysine to coordinate two nickel ions.

Its subcellular location is the cytoplasm. The enzyme catalyses urea + 2 H2O + H(+) = hydrogencarbonate + 2 NH4(+). It participates in nitrogen metabolism; urea degradation; CO(2) and NH(3) from urea (urease route): step 1/1. The chain is Urease subunit beta from Aliarcobacter butzleri (strain RM4018) (Arcobacter butzleri).